Reading from the N-terminus, the 289-residue chain is MATPREIKKRINSVKNTRKITRTMEMVSTAKAKKATNKVNAAKPYADLTRELVSSLSSLASIIHSPYLRKPDKIRKVAILAIAANRGLCGGFNSNLLRMVKNRIEELKSKGVEVEVHAAGKKAISFFKFAKVELVTSYTNIDDKAGSKEANDLASYFMERFANESVDSVEIISTHYYSAANQKPETTTVLPLQMEETGSKGSSGPEVLYEPDPKTILENLLPMVIKTTFVKIILESVASEHIARRVAMKAATDAAGEMIKLLTRGYNRVRQAKITQEISEIVGGAEAIS.

It belongs to the ATPase gamma chain family. In terms of assembly, F-type ATPases have 2 components, CF(1) - the catalytic core - and CF(0) - the membrane proton channel. CF(1) has five subunits: alpha(3), beta(3), gamma(1), delta(1), epsilon(1). CF(0) has three main subunits: a, b and c.

It localises to the cell inner membrane. Its function is as follows. Produces ATP from ADP in the presence of a proton gradient across the membrane. The gamma chain is believed to be important in regulating ATPase activity and the flow of protons through the CF(0) complex. The polypeptide is ATP synthase gamma chain (Leptospira biflexa serovar Patoc (strain Patoc 1 / ATCC 23582 / Paris)).